A 322-amino-acid polypeptide reads, in one-letter code: PI-PLC X domain-containing protein 3 (322 aa).

In terms of domain architecture, PI-PLC X-box spans 22 to 197 (TLHGIPLTNL…EYQVLVFYHN (176 aa)). Residues His37 and His114 contribute to the active site.

This Danio rerio (Zebrafish) protein is PI-PLC X domain-containing protein 3 (plcxd3).